The chain runs to 207 residues: Phenazine biosynthesis protein PhzD (207 aa).

The Proton donor role is filled by D38. Substrate contacts are provided by residues Q78, R87, K122, and 151–155 (YAHVG).

This sequence belongs to the isochorismatase family. Homodimer.

The enzyme catalyses (2S)-2-amino-4-deoxychorismate + H2O = (5S,6S)-6-amino-5-hydroxycyclohexa-1,3-diene-1-carboxyate + pyruvate. Its pathway is antibiotic biosynthesis; phenazine biosynthesis. Its function is as follows. Involved in the biosynthesis of the antibiotic phenazine, a nitrogen-containing heterocyclic molecule having important roles in virulence, competition and biological control. Catalyzes the hydrolysis of the vinyl ether functional group of 2-amino-2-deoxyisochorismate (ADIC), yielding pyruvate and trans-2,3-dihydro-3-hydroxyanthranilic acid (DHHA). This Pseudomonas fluorescens protein is Phenazine biosynthesis protein PhzD.